Reading from the N-terminus, the 606-residue chain is Glutamine--fructose-6-phosphate aminotransferase [isomerizing] (606 aa).

Catalysis depends on Cys-2, which acts as the Nucleophile; for GATase activity. Positions 2 to 217 (CGIVGMVGEN…DGDVMVLRKD (216 aa)) constitute a Glutamine amidotransferase type-2 domain. SIS domains follow at residues 284–423 (YEEL…INGY) and 455–596 (LSEK…PDKP). Catalysis depends on Lys-601, which acts as the For Fru-6P isomerization activity.

In terms of assembly, homodimer.

The protein resides in the cytoplasm. It carries out the reaction D-fructose 6-phosphate + L-glutamine = D-glucosamine 6-phosphate + L-glutamate. Functionally, catalyzes the first step in hexosamine metabolism, converting fructose-6P into glucosamine-6P using glutamine as a nitrogen source. The chain is Glutamine--fructose-6-phosphate aminotransferase [isomerizing] from Thermotoga maritima (strain ATCC 43589 / DSM 3109 / JCM 10099 / NBRC 100826 / MSB8).